Here is a 413-residue protein sequence, read N- to C-terminus: Calsequestrin-2 (413 aa).

A signal peptide spans 1–19 (MKRIYLLVVGLYLLSFSRA). Position 282 is a phosphotyrosine (tyrosine 282). A glycan (N-linked (GlcNAc...) asparagine) is linked at asparagine 335. Positions 365 to 413 (VLSGKINTEDDDNEDEDDDGDNDNDDDDDDDDNSDEDNDDSDDDDDDDE) are disordered. The span at 373-413 (EDDDNEDEDDDGDNDNDDDDDDDDNSDEDNDDSDDDDDDDE) shows a compositional bias: acidic residues. Phosphoserine is present on residues serine 398 and serine 405.

This sequence belongs to the calsequestrin family. Monomer, homodimer and homooligomer. Mostly monomeric in the absence of calcium. Forms higher oligomers in a calcium-dependent manner. Dimers associate to form tetramers, that then form linear homomer chains. Interacts with ASPH and TRDN. Phosphorylation in the C-terminus, probably by CK2, moderately increases calcium buffering capacity. Post-translationally, N-glycosylated. As to expression, detected in stomach and vas deferens (at protein level).

Its subcellular location is the sarcoplasmic reticulum lumen. Its function is as follows. Calsequestrin is a high-capacity, moderate affinity, calcium-binding protein and thus acts as an internal calcium store in muscle. Calcium ions are bound by clusters of acidic residues at the protein surface, especially at the interface between subunits. Can bind around 60 Ca(2+) ions. Regulates the release of lumenal Ca(2+) via the calcium release channel RYR2; this plays an important role in triggering muscle contraction. Plays a role in excitation-contraction coupling in the heart and in regulating the rate of heart beats. The chain is Calsequestrin-2 (Casq2) from Rattus norvegicus (Rat).